The primary structure comprises 400 residues: Nicotinate phosphoribosyltransferase (400 aa).

The residue at position 220 (His-220) is a Phosphohistidine; by autocatalysis.

The protein belongs to the NAPRTase family. Transiently phosphorylated on a His residue during the reaction cycle. Phosphorylation strongly increases the affinity for substrates and increases the rate of nicotinate D-ribonucleotide production. Dephosphorylation regenerates the low-affinity form of the enzyme, leading to product release.

The catalysed reaction is nicotinate + 5-phospho-alpha-D-ribose 1-diphosphate + ATP + H2O = nicotinate beta-D-ribonucleotide + ADP + phosphate + diphosphate. It functions in the pathway cofactor biosynthesis; NAD(+) biosynthesis; nicotinate D-ribonucleotide from nicotinate: step 1/1. Its function is as follows. Catalyzes the synthesis of beta-nicotinate D-ribonucleotide from nicotinate and 5-phospho-D-ribose 1-phosphate at the expense of ATP. This is Nicotinate phosphoribosyltransferase from Salmonella dublin (strain CT_02021853).